A 317-amino-acid polypeptide reads, in one-letter code: D-alanine--D-alanine ligase (317 aa).

Residues 103-299 enclose the ATP-grasp domain; the sequence is KHIFHSLNID…FNELVKIIVE (197 aa). 130 to 183 is a binding site for ATP; it reads KVDYPYVLKPINEGSSIGVHMIFSHEDYLELKNNSSTIMEKMIIEEYIPGIELH. The Mg(2+) site is built by Asp-251, Glu-265, and Asn-267.

This sequence belongs to the D-alanine--D-alanine ligase family. The cofactor is Mg(2+). It depends on Mn(2+) as a cofactor.

It is found in the cytoplasm. The enzyme catalyses 2 D-alanine + ATP = D-alanyl-D-alanine + ADP + phosphate + H(+). It participates in cell wall biogenesis; peptidoglycan biosynthesis. Cell wall formation. The polypeptide is D-alanine--D-alanine ligase (Wolbachia pipientis subsp. Culex pipiens (strain wPip)).